A 296-amino-acid chain; its full sequence is Cytidine deaminase (296 aa).

2 CMP/dCMP-type deaminase domains span residues 47 to 167 and 186 to 296; these read ELNE…FGPS and DSND…VEPE. Residue 88–90 participates in substrate binding; sequence NIE. H101 is a binding site for Zn(2+). E103 serves as the catalytic Proton donor. Residues C128 and C131 each coordinate Zn(2+).

Belongs to the cytidine and deoxycytidylate deaminase family. Homodimer. Requires Zn(2+) as cofactor.

It catalyses the reaction cytidine + H2O + H(+) = uridine + NH4(+). The enzyme catalyses 2'-deoxycytidine + H2O + H(+) = 2'-deoxyuridine + NH4(+). Its function is as follows. This enzyme scavenges exogenous and endogenous cytidine and 2'-deoxycytidine for UMP synthesis. This is Cytidine deaminase from Shewanella pealeana (strain ATCC 700345 / ANG-SQ1).